The following is a 312-amino-acid chain: Telomere-binding protein OPG077 (312 aa).

It belongs to the orthopoxvirus OPG077 family.

It is found in the virion. Its function is as follows. DNA-binding protein which binds to the hairpin form of the viral telomeric sequence. Required for the production of mature virions (MV). The polypeptide is Telomere-binding protein OPG077 (OPG077) (Variola virus (isolate Human/India/Ind3/1967) (VARV)).